The chain runs to 343 residues: Fc receptor-like protein 1 (343 aa).

The signal sequence occupies residues 1–16; it reads MLPWLLLLICALPCEP. Ig-like C2-type domains are found at residues 17-109 and 117-200; these read AGIS…VSIH and PVLT…EVVA. Over 17-219 the chain is Extracellular; it reads AGISDVSLKT…PTENGISHLS (203 aa). N51 carries N-linked (GlcNAc...) asparagine glycosylation. A disulfide bond links C138 and C185. N-linked (GlcNAc...) asparagine glycosylation is present at N202. The chain crosses the membrane as a helical span at residues 220-240; the sequence is LGLTGWLLGCLSPITMALIFC. At 241-343 the chain is on the cytoplasmic side; the sequence is YWLKRKIGRQ…IAHMDYEDAM (103 aa). A disordered region spans residues 251–278; that stretch reads SEDPVRSPPQTVLQGSTYPKSPDSRQPE. The segment covering 258 to 269 has biased composition (polar residues); it reads PPQTVLQGSTYP. Short sequence motifs (ITIM motif) lie at residues 266 to 271, 279 to 284, and 291 to 296; these read STYPKS, PLYENV, and EVYSLV. Y281 carries the phosphotyrosine modification. Y297 bears the Phosphotyrosine mark. 2 consecutive short sequence motifs (ITIM motif) follow at residues 325 to 330 and 337 to 342; these read GLYSKP and MDYEDA.

In terms of assembly, interacts with ABL1. Interacts with GRB2 and SOS1. Interacts with SHIP-1/INPP5D. Phosphorylated on C-terminal region upon BCR ligation leading to recruitment of ABL1. Widely expressed. Expressed in B-cells at the various stages of differentiation.

It is found in the cell membrane. In terms of biological role, may function as an activating coreceptor in B-cells. May function in B-cells activation and differentiation. The protein is Fc receptor-like protein 1 (Fcrl1) of Mus musculus (Mouse).